The following is a 213-amino-acid chain: ATP synthase subunit delta 2 (213 aa).

This sequence belongs to the ATPase delta chain family. F-type ATPases have 2 components, F(1) - the catalytic core - and F(0) - the membrane proton channel. F(1) has five subunits: alpha(3), beta(3), gamma(1), delta(1), epsilon(1). F(0) has three main subunits: a(1), b(2) and c(10-14). The alpha and beta chains form an alternating ring which encloses part of the gamma chain. F(1) is attached to F(0) by a central stalk formed by the gamma and epsilon chains, while a peripheral stalk is formed by the delta and b chains.

The protein resides in the cell inner membrane. F(1)F(0) ATP synthase produces ATP from ADP in the presence of a proton or sodium gradient. F-type ATPases consist of two structural domains, F(1) containing the extramembraneous catalytic core and F(0) containing the membrane proton channel, linked together by a central stalk and a peripheral stalk. During catalysis, ATP synthesis in the catalytic domain of F(1) is coupled via a rotary mechanism of the central stalk subunits to proton translocation. In terms of biological role, this protein is part of the stalk that links CF(0) to CF(1). It either transmits conformational changes from CF(0) to CF(1) or is implicated in proton conduction. This chain is ATP synthase subunit delta 2, found in Brachyspira hyodysenteriae (strain ATCC 49526 / WA1).